We begin with the raw amino-acid sequence, 280 residues long: Acetylglutamate kinase (280 aa).

Substrate contacts are provided by residues 57-58 (GG), R79, and N174.

The protein belongs to the acetylglutamate kinase family. ArgB subfamily.

It is found in the cytoplasm. It carries out the reaction N-acetyl-L-glutamate + ATP = N-acetyl-L-glutamyl 5-phosphate + ADP. The protein operates within amino-acid biosynthesis; L-arginine biosynthesis; N(2)-acetyl-L-ornithine from L-glutamate: step 2/4. In terms of biological role, catalyzes the ATP-dependent phosphorylation of N-acetyl-L-glutamate. The chain is Acetylglutamate kinase from Helicobacter hepaticus (strain ATCC 51449 / 3B1).